The primary structure comprises 157 residues: Transcriptional repressor NrdR (157 aa).

The segment at 1 to 22 (MKCPYCSSPDSRVINSRPSDDG) is disordered. The segment at 3–34 (CPYCSSPDSRVINSRPSDDGASIRRRRECLTC) is a zinc-finger region. Over residues 8-17 (SPDSRVINSR) the composition is skewed to polar residues. The 88-residue stretch at 49 to 136 (LMVVKRSGVR…VYRDFDSLER (88 aa)) folds into the ATP-cone domain.

This sequence belongs to the NrdR family. Zn(2+) is required as a cofactor.

Its function is as follows. Negatively regulates transcription of bacterial ribonucleotide reductase nrd genes and operons by binding to NrdR-boxes. In Deinococcus radiodurans (strain ATCC 13939 / DSM 20539 / JCM 16871 / CCUG 27074 / LMG 4051 / NBRC 15346 / NCIMB 9279 / VKM B-1422 / R1), this protein is Transcriptional repressor NrdR.